Here is a 261-residue protein sequence, read N- to C-terminus: 1-(5-phosphoribosyl)-5-[(5-phosphoribosylamino)methylideneamino] imidazole-4-carboxamide isomerase (261 aa).

D15 (proton acceptor) is an active-site residue. The active-site Proton donor is the D136.

Belongs to the HisA/HisF family.

The protein localises to the cytoplasm. It carries out the reaction 1-(5-phospho-beta-D-ribosyl)-5-[(5-phospho-beta-D-ribosylamino)methylideneamino]imidazole-4-carboxamide = 5-[(5-phospho-1-deoxy-D-ribulos-1-ylimino)methylamino]-1-(5-phospho-beta-D-ribosyl)imidazole-4-carboxamide. Its pathway is amino-acid biosynthesis; L-histidine biosynthesis; L-histidine from 5-phospho-alpha-D-ribose 1-diphosphate: step 4/9. In Synechococcus sp. (strain JA-2-3B'a(2-13)) (Cyanobacteria bacterium Yellowstone B-Prime), this protein is 1-(5-phosphoribosyl)-5-[(5-phosphoribosylamino)methylideneamino] imidazole-4-carboxamide isomerase.